The primary structure comprises 427 residues: Trigger factor (427 aa).

One can recognise a PPIase FKBP-type domain in the interval Gly-163 to Pro-248.

It belongs to the FKBP-type PPIase family. Tig subfamily.

It localises to the cytoplasm. The enzyme catalyses [protein]-peptidylproline (omega=180) = [protein]-peptidylproline (omega=0). In terms of biological role, involved in protein export. Acts as a chaperone by maintaining the newly synthesized protein in an open conformation. Functions as a peptidyl-prolyl cis-trans isomerase. This chain is Trigger factor, found in Streptococcus agalactiae serotype V (strain ATCC BAA-611 / 2603 V/R).